A 122-amino-acid chain; its full sequence is Large ribosomal subunit protein uL14 (122 aa).

It belongs to the universal ribosomal protein uL14 family. In terms of assembly, part of the 50S ribosomal subunit. Forms a cluster with proteins L3 and L19. In the 70S ribosome, L14 and L19 interact and together make contacts with the 16S rRNA in bridges B5 and B8.

Functionally, binds to 23S rRNA. Forms part of two intersubunit bridges in the 70S ribosome. In Geobacillus sp. (strain WCH70), this protein is Large ribosomal subunit protein uL14.